The chain runs to 326 residues: Serine protease 38 (326 aa).

The N-terminal stretch at Met-1–Ala-32 is a signal peptide. A propeptide spans Leu-33–Lys-59 (activation peptide). Positions Ile-60 to Glu-293 constitute a Peptidase S1 domain. Residues Cys-85 and Cys-101 are joined by a disulfide bond. Catalysis depends on His-100, which acts as the Charge relay system. Residue Asn-125 is glycosylated (N-linked (GlcNAc...) asparagine). Residue Asp-150 is the Charge relay system of the active site. 3 cysteine pairs are disulfide-bonded: Cys-183-Cys-251, Cys-214-Cys-230, and Cys-241-Cys-269. Ser-245 acts as the Charge relay system in catalysis.

This sequence belongs to the peptidase S1 family.

The protein localises to the secreted. This is Serine protease 38 (PRSS38) from Homo sapiens (Human).